A 397-amino-acid chain; its full sequence is CCA-adding enzyme (397 aa).

Residues Gly27 and Arg30 each coordinate ATP. CTP-binding residues include Gly27 and Arg30. Positions 40 and 42 each coordinate Mg(2+). ATP contacts are provided by Arg111, Asp154, Arg157, Arg160, and Arg163. Positions 111, 154, 157, 160, and 163 each coordinate CTP.

It belongs to the tRNA nucleotidyltransferase/poly(A) polymerase family. Bacterial CCA-adding enzyme type 3 subfamily. Homodimer. Mg(2+) is required as a cofactor.

The enzyme catalyses a tRNA precursor + 2 CTP + ATP = a tRNA with a 3' CCA end + 3 diphosphate. It carries out the reaction a tRNA with a 3' CCA end + 2 CTP + ATP = a tRNA with a 3' CCACCA end + 3 diphosphate. In terms of biological role, catalyzes the addition and repair of the essential 3'-terminal CCA sequence in tRNAs without using a nucleic acid template. Adds these three nucleotides in the order of C, C, and A to the tRNA nucleotide-73, using CTP and ATP as substrates and producing inorganic pyrophosphate. Has no poly(A) polymerase activity. The chain is CCA-adding enzyme from Bacillus subtilis (strain 168).